Consider the following 429-residue polypeptide: 3-phosphoshikimate 1-carboxyvinyltransferase (429 aa).

Residues lysine 23, serine 24, and arginine 28 each contribute to the 3-phosphoshikimate site. Lysine 23 serves as a coordination point for phosphoenolpyruvate. Phosphoenolpyruvate-binding residues include glycine 95 and arginine 123. 4 residues coordinate 3-phosphoshikimate: serine 168, glutamine 170, aspartate 316, and lysine 343. Position 170 (glutamine 170) interacts with phosphoenolpyruvate. Catalysis depends on aspartate 316, which acts as the Proton acceptor. Phosphoenolpyruvate is bound by residues arginine 347 and arginine 389.

Belongs to the EPSP synthase family. As to quaternary structure, monomer.

It is found in the cytoplasm. The enzyme catalyses 3-phosphoshikimate + phosphoenolpyruvate = 5-O-(1-carboxyvinyl)-3-phosphoshikimate + phosphate. The protein operates within metabolic intermediate biosynthesis; chorismate biosynthesis; chorismate from D-erythrose 4-phosphate and phosphoenolpyruvate: step 6/7. Catalyzes the transfer of the enolpyruvyl moiety of phosphoenolpyruvate (PEP) to the 5-hydroxyl of shikimate-3-phosphate (S3P) to produce enolpyruvyl shikimate-3-phosphate and inorganic phosphate. This is 3-phosphoshikimate 1-carboxyvinyltransferase from Bacillus thuringiensis subsp. konkukian (strain 97-27).